The sequence spans 486 residues: Ribulose bisphosphate carboxylase large chain, chromosomal (486 aa).

Substrate is bound by residues asparagine 126 and threonine 176. The Proton acceptor role is filled by lysine 178. Lysine 180 is a substrate binding site. Residues lysine 204, aspartate 206, and glutamate 207 each coordinate Mg(2+). An N6-carboxylysine modification is found at lysine 204. The active-site Proton acceptor is the histidine 296. Residues arginine 297, histidine 329, and serine 381 each coordinate substrate.

Belongs to the RuBisCO large chain family. Type I subfamily. Heterohexadecamer of 8 large chains and 8 small chains; disulfide-linked. The disulfide link is formed within the large subunit homodimers. Mg(2+) serves as cofactor. Post-translationally, the disulfide bond which can form between Cys-278 in the large chain dimeric partners within the hexadecamer appears to be associated with oxidative stress and protein turnover.

The enzyme catalyses 2 (2R)-3-phosphoglycerate + 2 H(+) = D-ribulose 1,5-bisphosphate + CO2 + H2O. The catalysed reaction is D-ribulose 1,5-bisphosphate + O2 = 2-phosphoglycolate + (2R)-3-phosphoglycerate + 2 H(+). RuBisCO catalyzes two reactions: the carboxylation of D-ribulose 1,5-bisphosphate, the primary event in carbon dioxide fixation, as well as the oxidative fragmentation of the pentose substrate. Both reactions occur simultaneously and in competition at the same active site. The polypeptide is Ribulose bisphosphate carboxylase large chain, chromosomal (cbbL1) (Cupriavidus necator (strain ATCC 17699 / DSM 428 / KCTC 22496 / NCIMB 10442 / H16 / Stanier 337) (Ralstonia eutropha)).